The primary structure comprises 141 residues: Hemoglobin subunit beta (141 aa).

One can recognise a Globin domain in the interval 2-141; that stretch reads HWSEVELHEI…VVDAISKEYH (140 aa). His-58 and His-87 together coordinate heme b.

It belongs to the globin family. In terms of assembly, heterotetramer of two alpha chains and two beta chains. In terms of tissue distribution, red blood cells.

In terms of biological role, involved in oxygen transport from the lung to the various peripheral tissues. This is Hemoglobin subunit beta (HBB) from Heterodontus portusjacksoni (Port Jackson shark).